Here is a 197-residue protein sequence, read N- to C-terminus: MAKVQVLNVAVLDNPSPFGNPFQFEITFECMEDLPEDLEWKIIYVGSAESEEYDQTLDSVLVGPVPAGRHMFVFQADAPNCSLIPETDAVGVTVVLITCTYRGQEFIRIGYYVNNEYTDTELRENPPLKPNYGQLQRNILASNPRVTRFHINWEGCAEKMEDSENVDPAPNAMLPPSCTPGKAPLLGLVPDNSMDCL.

Belongs to the ASF1 family. As to quaternary structure, interacts with histone H3 and histone H4.

It localises to the nucleus. Histone chaperone that facilitates histone deposition and histone exchange and removal during nucleosome assembly and disassembly. The chain is Histone chaperone asf1b-A (asf1ba) from Danio rerio (Zebrafish).